The chain runs to 274 residues: Cytochrome b-c1 complex subunit Rieske, mitochondrial (274 aa).

At Ser-79–Ser-103 the chain is on the mitochondrial matrix side. The chain crosses the membrane as a helical span at residues Lys-104–Met-140. At Ser-141–Gly-274 the chain is on the mitochondrial intermembrane side. The region spanning Glu-187–Ile-272 is the Rieske domain. [2Fe-2S] cluster-binding residues include Cys-217, His-219, Cys-236, His-239, and Ser-241. Cys-222 and Cys-238 are oxidised to a cystine.

This sequence belongs to the Rieske iron-sulfur protein family. Component of the ubiquinol-cytochrome c oxidoreductase (cytochrome b-c1 complex, complex III, CIII), a multisubunit enzyme composed of 11 subunits. The complex is composed of 3 respiratory subunits cytochrome b, cytochrome c1 and Rieske protein UQCRFS1, 2 core protein subunits UQCRC1/QCR1 and UQCRC2/QCR2, and 6 low-molecular weight protein subunits UQCRH/QCR6, UQCRB/QCR7, UQCRQ/QCR8, UQCR10/QCR9, UQCR11/QCR10 and subunit 9, the cleavage product of Rieske protein UQCRFS1. The complex exists as an obligatory dimer and forms supercomplexes (SCs) in the inner mitochondrial membrane with NADH-ubiquinone oxidoreductase (complex I, CI) and cytochrome c oxidase (complex IV, CIV), resulting in different assemblies (supercomplex SCI(1)III(2)IV(1) and megacomplex MCI(2)III(2)IV(2)). Incorporation of the Rieske protein UQCRFS1 is the penultimate step in complex III assembly. Interacts with TTC19, which is involved in the clearance of UQCRFS1 fragments. As to quaternary structure, component of the ubiquinol-cytochrome c oxidoreductase (cytochrome b-c1 complex, complex III, CIII). Subunit 9 corresponds to the mitochondrial targeting sequence (MTS) of Rieske protein UQCRFS1. It is retained after processing and incorporated inside complex III, where it remains bound to the complex and localizes between the 2 core subunits UQCRC1/QCR1 and UQCRC2/QCR2. [2Fe-2S] cluster serves as cofactor. Proteolytic processing is necessary for the correct insertion of UQCRFS1 in the complex III dimer. Several fragments are generated during UQCRFS1 insertion, most probably due to the endogenous matrix-processing peptidase (MPP) activity of the 2 core protein subunits UQCRC1/QCR1 and UQCRC2/QCR2, which are homologous to the 2 mitochondrial-processing peptidase (MPP) subunits beta-MPP and alpha-MPP respectively. The action of the protease is also necessary for the clearance of the UQCRFS1 fragments.

It localises to the mitochondrion inner membrane. It carries out the reaction a quinol + 2 Fe(III)-[cytochrome c](out) = a quinone + 2 Fe(II)-[cytochrome c](out) + 2 H(+)(out). Component of the ubiquinol-cytochrome c oxidoreductase, a multisubunit transmembrane complex that is part of the mitochondrial electron transport chain which drives oxidative phosphorylation. The respiratory chain contains 3 multisubunit complexes succinate dehydrogenase (complex II, CII), ubiquinol-cytochrome c oxidoreductase (cytochrome b-c1 complex, complex III, CIII) and cytochrome c oxidase (complex IV, CIV), that cooperate to transfer electrons derived from NADH and succinate to molecular oxygen, creating an electrochemical gradient over the inner membrane that drives transmembrane transport and the ATP synthase. The cytochrome b-c1 complex catalyzes electron transfer from ubiquinol to cytochrome c, linking this redox reaction to translocation of protons across the mitochondrial inner membrane, with protons being carried across the membrane as hydrogens on the quinol. In the process called Q cycle, 2 protons are consumed from the matrix, 4 protons are released into the intermembrane space and 2 electrons are passed to cytochrome c. The Rieske protein is a catalytic core subunit containing a [2Fe-2S] iron-sulfur cluster. It cycles between 2 conformational states during catalysis to transfer electrons from the quinol bound in the Q(0) site in cytochrome b to cytochrome c1. Incorporation of UQCRFS1 is the penultimate step in complex III assembly. In terms of biological role, component of the ubiquinol-cytochrome c oxidoreductase (cytochrome b-c1 complex, complex III, CIII). UQCRFS1 undergoes proteolytic processing once it is incorporated in the complex III dimer. One of the fragments, called subunit 9, corresponds to its mitochondrial targeting sequence (MTS). The proteolytic processing is necessary for the correct insertion of UQCRFS1 in the complex III dimer, but the persistence of UQCRFS1-derived fragments may prevent newly imported UQCRFS1 to be processed and assembled into complex III and is detrimental for the complex III structure and function. This chain is Cytochrome b-c1 complex subunit Rieske, mitochondrial (UQCRFS1), found in Bos taurus (Bovine).